The chain runs to 132 residues: Fumarate reductase subunit C (132 aa).

Helical transmembrane passes span 30–50 (ATSVFAVWFCIVLLYGVLCFA), 70–90 (IVVFLNIITLIATLYHTVTYF), and 110–130 (VVRNALWAVTALVSVIALVLV).

Belongs to the FrdC family. As to quaternary structure, part of an enzyme complex containing four subunits: a flavoprotein (FrdA), an iron-sulfur protein (FrdB), and two hydrophobic anchor proteins (FrdC and FrdD).

It localises to the cell inner membrane. Its function is as follows. Anchors the catalytic components of the fumarate reductase complex to the cell membrane, binds quinones. The protein is Fumarate reductase subunit C of Haemophilus influenzae (strain ATCC 51907 / DSM 11121 / KW20 / Rd).